Reading from the N-terminus, the 702-residue chain is Ribosomal RNA large subunit methyltransferase K/L (702 aa).

A THUMP domain is found at 43–154 (LIYQSLMWSR…KETASIALDL (112 aa)).

Belongs to the methyltransferase superfamily. RlmKL family.

The protein localises to the cytoplasm. It carries out the reaction guanosine(2445) in 23S rRNA + S-adenosyl-L-methionine = N(2)-methylguanosine(2445) in 23S rRNA + S-adenosyl-L-homocysteine + H(+). The catalysed reaction is guanosine(2069) in 23S rRNA + S-adenosyl-L-methionine = N(2)-methylguanosine(2069) in 23S rRNA + S-adenosyl-L-homocysteine + H(+). Specifically methylates the guanine in position 2445 (m2G2445) and the guanine in position 2069 (m7G2069) of 23S rRNA. The sequence is that of Ribosomal RNA large subunit methyltransferase K/L from Salmonella choleraesuis (strain SC-B67).